The sequence spans 205 residues: MIAKLKGILDSITDSYLIIDINGVGYQVYSSGKTLMKLIKEEGSIVSLFIETHVREDRIHLFGFLDNTEKVAFNMLQSVSGIGTKMALHILSNLTPHQLQIAISSQNRHQLKAISGVGPKLIDRLMIELRDKVANINTIANNTSLATLSTDSNTHDNILSDAITALIALGISRAEATQILSDIYALSPSISVNELVRTALQRRAK.

The domain I stretch occupies residues 1-65 (MIAKLKGILD…EDRIHLFGFL (65 aa)). Positions 66-144 (DNTEKVAFNM…NINTIANNTS (79 aa)) are domain II. The segment at 145-153 (LATLSTDSN) is flexible linker. Residues 154–205 (THDNILSDAITALIALGISRAEATQILSDIYALSPSISVNELVRTALQRRAK) form a domain III region.

Belongs to the RuvA family. Homotetramer. Forms an RuvA(8)-RuvB(12)-Holliday junction (HJ) complex. HJ DNA is sandwiched between 2 RuvA tetramers; dsDNA enters through RuvA and exits via RuvB. An RuvB hexamer assembles on each DNA strand where it exits the tetramer. Each RuvB hexamer is contacted by two RuvA subunits (via domain III) on 2 adjacent RuvB subunits; this complex drives branch migration. In the full resolvosome a probable DNA-RuvA(4)-RuvB(12)-RuvC(2) complex forms which resolves the HJ.

The protein localises to the cytoplasm. Its function is as follows. The RuvA-RuvB-RuvC complex processes Holliday junction (HJ) DNA during genetic recombination and DNA repair, while the RuvA-RuvB complex plays an important role in the rescue of blocked DNA replication forks via replication fork reversal (RFR). RuvA specifically binds to HJ cruciform DNA, conferring on it an open structure. The RuvB hexamer acts as an ATP-dependent pump, pulling dsDNA into and through the RuvAB complex. HJ branch migration allows RuvC to scan DNA until it finds its consensus sequence, where it cleaves and resolves the cruciform DNA. The polypeptide is Holliday junction branch migration complex subunit RuvA (Orientia tsutsugamushi (strain Ikeda) (Rickettsia tsutsugamushi)).